Here is a 294-residue protein sequence, read N- to C-terminus: ATP synthase gamma chain (294 aa).

It belongs to the ATPase gamma chain family. In terms of assembly, F-type ATPases have 2 components, CF(1) - the catalytic core - and CF(0) - the membrane proton channel. CF(1) has five subunits: alpha(3), beta(3), gamma(1), delta(1), epsilon(1). CF(0) has three main subunits: a, b and c.

Its subcellular location is the cell inner membrane. In terms of biological role, produces ATP from ADP in the presence of a proton gradient across the membrane. The gamma chain is believed to be important in regulating ATPase activity and the flow of protons through the CF(0) complex. This chain is ATP synthase gamma chain, found in Campylobacter jejuni subsp. doylei (strain ATCC BAA-1458 / RM4099 / 269.97).